The following is a 110-amino-acid chain: UPF0060 membrane protein BTH_I2792 (110 aa).

A run of 4 helical transmembrane segments spans residues 9-29 (ALFV…WLVL), 34-54 (PVWL…LLTL), 64-84 (AAYG…VDGV), and 86-106 (LSRW…VIAL).

The protein belongs to the UPF0060 family.

It localises to the cell inner membrane. The sequence is that of UPF0060 membrane protein BTH_I2792 from Burkholderia thailandensis (strain ATCC 700388 / DSM 13276 / CCUG 48851 / CIP 106301 / E264).